We begin with the raw amino-acid sequence, 412 residues long: Indian hedgehog B protein (412 aa).

The N-terminal stretch at 1–23 is a signal peptide; it reads MRLSTAAALLTGFILAFSPAYDG. Residue C24 is the site of N-palmitoyl cysteine attachment. E89, E90, D95, T125, E126, D129, and D131 together coordinate Ca(2+). Residues H140, D147, and H182 each contribute to the Zn(2+) site. G197 is lipidated: Cholesterol glycine ester.

It belongs to the hedgehog family. In terms of assembly, multimer. Interacts with BOC and CDON. Interacts with PTCH1. Interacts with glypican GPC3. Post-translationally, cholesterylation is required for N-product targeting to lipid rafts and multimerization. In terms of processing, the C-terminal domain displays an autoproteolysis activity and a cholesterol transferase activity. Both activities result in the cleavage of the full-length protein and covalent attachment of a cholesterol moiety to the C-terminal of the newly generated N-product. The N-product is the active species in both local and long-range signaling, whereas the C-product is degraded in the endoplasmic reticulum. N-palmitoylation by HHAT of N-product is required for indian hedgehog protein N-product multimerization and full activity. Expressed exclusively in the notochord.

It localises to the cell membrane. Its subcellular location is the endoplasmic reticulum membrane. It is found in the golgi apparatus membrane. The protein localises to the secreted. It catalyses the reaction glycyl-L-cysteinyl-[protein] + cholesterol + H(+) = [protein]-C-terminal glycyl cholesterol ester + N-terminal L-cysteinyl-[protein]. Signal involved in the early induction and patterning of anterodorsal ectoderm, nervous system and somites. It is involved in the regulation of endochondral skeleton formation, and the development of retinal pigment epithelium (RPE), photoreceptors and periocular tissues. Its function is as follows. The C-terminal part of the indian hedgehog protein precursor displays an autoproteolysis and a cholesterol transferase activity. Both activities result in the cleavage of the full-length protein into two parts followed by the covalent attachment of a cholesterol moiety to the C-terminal of the newly generated N-product. Both activities occur in the endoplasmic reticulum. Functionally, the dually lipidated indian hedgehog protein N-product is a morphogen which is essential for a variety of patterning events during development. Binds to the patched (PTCH1) receptor, which functions in association with smoothened (SMO), to activate the transcription of target genes. In the notochord, induces somite patterning and muscle pioneer differentiation. The chain is Indian hedgehog B protein (ihhb) from Danio rerio (Zebrafish).